The chain runs to 211 residues: LexA repressor (211 aa).

The H-T-H motif DNA-binding region spans 27-47; that stretch reads QTEIARAFGFKGVRAVQHHLD. Active-site for autocatalytic cleavage activity residues include Ser131 and Lys168.

It belongs to the peptidase S24 family. As to quaternary structure, homodimer.

It catalyses the reaction Hydrolysis of Ala-|-Gly bond in repressor LexA.. Its function is as follows. Represses a number of genes involved in the response to DNA damage (SOS response), including recA and lexA. In the presence of single-stranded DNA, RecA interacts with LexA causing an autocatalytic cleavage which disrupts the DNA-binding part of LexA, leading to derepression of the SOS regulon and eventually DNA repair. The polypeptide is LexA repressor (Xylella fastidiosa (strain M12)).